Here is a 637-residue protein sequence, read N- to C-terminus: Phospholipase B (637 aa).

Positions 1–19 (MSIATATFAFSLFATIAFA) are cleaved as a signal peptide. Residues 46–572 (DCPSNVTWIR…DTWCWAGDDN (527 aa)) enclose the PLA2c domain. Residues N50, N56, N122, N231, N246, N272, N314, N343, N387, N433, N481, N501, N528, N553, N572, N594, and N606 are each glycosylated (N-linked (GlcNAc...) asparagine).

The protein belongs to the lysophospholipase family. Post-translationally, N-glycosylated.

Its subcellular location is the secreted. It localises to the cell membrane. It catalyses the reaction a 1-acyl-sn-glycero-3-phosphocholine + H2O = sn-glycerol 3-phosphocholine + a fatty acid + H(+). Inhibited by Fe(3+) ion. Exhibits phospholipase B (PLB), lysophospholipase (LPL) and lysophospholipase/transacylase (LPTA) activities. In Cryptococcus neoformans var. grubii serotype A (strain H99 / ATCC 208821 / CBS 10515 / FGSC 9487) (Filobasidiella neoformans var. grubii), this protein is Phospholipase B (PLB1).